The sequence spans 249 residues: 2,3-bisphosphoglycerate-dependent phosphoglycerate mutase 2 (249 aa).

Substrate contacts are provided by residues 8–15 (RHGESIWN), 21–22 (TG), Arg60, 87–90 (ERHY), Lys98, 114–115 (RR), and 183–184 (GN). His9 serves as the catalytic Tele-phosphohistidine intermediate. The Proton donor/acceptor role is filled by Glu87.

The protein belongs to the phosphoglycerate mutase family. BPG-dependent PGAM subfamily. Homodimer.

It carries out the reaction (2R)-2-phosphoglycerate = (2R)-3-phosphoglycerate. Its pathway is carbohydrate degradation; glycolysis; pyruvate from D-glyceraldehyde 3-phosphate: step 3/5. Catalyzes the interconversion of 2-phosphoglycerate and 3-phosphoglycerate. The polypeptide is 2,3-bisphosphoglycerate-dependent phosphoglycerate mutase 2 (Nitrosomonas europaea (strain ATCC 19718 / CIP 103999 / KCTC 2705 / NBRC 14298)).